The primary structure comprises 205 residues: GTP cyclohydrolase 1 (205 aa).

Cys93, His96, and Cys166 together coordinate Zn(2+).

Belongs to the GTP cyclohydrolase I family. Homomer.

The catalysed reaction is GTP + H2O = 7,8-dihydroneopterin 3'-triphosphate + formate + H(+). The protein operates within cofactor biosynthesis; 7,8-dihydroneopterin triphosphate biosynthesis; 7,8-dihydroneopterin triphosphate from GTP: step 1/1. The protein is GTP cyclohydrolase 1 of Mycobacterium leprae (strain Br4923).